The sequence spans 176 residues: Dynein light chain Tctex-type 5-B (176 aa).

The protein belongs to the dynein light chain Tctex-type family.

The sequence is that of Dynein light chain Tctex-type 5-B (Dynlt5-b) from Xenopus laevis (African clawed frog).